We begin with the raw amino-acid sequence, 106 residues long: Large ribosomal subunit protein uL30 (106 aa).

Belongs to the universal ribosomal protein uL30 family. As to quaternary structure, part of the 50S ribosomal subunit.

The protein is Large ribosomal subunit protein uL30 of Ruthia magnifica subsp. Calyptogena magnifica.